Here is a 209-residue protein sequence, read N- to C-terminus: Uridine kinase (209 aa).

12–19 (GGTGSGKS) is a binding site for ATP.

Belongs to the uridine kinase family.

The protein resides in the cytoplasm. The catalysed reaction is uridine + ATP = UMP + ADP + H(+). It catalyses the reaction cytidine + ATP = CMP + ADP + H(+). It functions in the pathway pyrimidine metabolism; CTP biosynthesis via salvage pathway; CTP from cytidine: step 1/3. Its pathway is pyrimidine metabolism; UMP biosynthesis via salvage pathway; UMP from uridine: step 1/1. In Clostridium tetani (strain Massachusetts / E88), this protein is Uridine kinase.